The following is a 439-amino-acid chain: Tol-Pal system protein TolB (439 aa).

The N-terminal stretch at 1 to 22 (MKKPLRWLAALTALLLPLSAFA) is a signal peptide.

Belongs to the TolB family. In terms of assembly, the Tol-Pal system is composed of five core proteins: the inner membrane proteins TolA, TolQ and TolR, the periplasmic protein TolB and the outer membrane protein Pal. They form a network linking the inner and outer membranes and the peptidoglycan layer.

Its subcellular location is the periplasm. Part of the Tol-Pal system, which plays a role in outer membrane invagination during cell division and is important for maintaining outer membrane integrity. This is Tol-Pal system protein TolB from Xanthomonas campestris pv. campestris (strain 8004).